Consider the following 674-residue polypeptide: Slender lobes-like protein (674 aa).

Disordered stretches follow at residues 65–137 (LEKS…NASK), 168–321 (NELN…TIKK), and 352–382 (QKSR…RVEV). Residues 73-97 (PKKKVQTKKHLPPVRKKDSVKRRRI) are compositionally biased toward basic residues. The segment covering 127-137 (NQSNCSSNASK) has biased composition (polar residues). The span at 216–228 (VDSDDEEEQDQDQ) shows a compositional bias: acidic residues. The span at 233–245 (KPAESENHSEIKK) shows a compositional bias: basic and acidic residues. Ser248 is modified (phosphoserine). Over residues 272 to 312 (EDPKEAGKNEESDKDKPAENGKSDKDKQAETEMSDEDKPSE) the composition is skewed to basic and acidic residues. Ser358 and Ser391 each carry phosphoserine. 2 disordered regions span residues 395-585 (MVAE…AGYV) and 618-659 (KYFR…NSAK). Positions 400 to 410 (KRQKNKRKRLS) are enriched in basic residues. Position 414 is a phosphoserine (Ser414). Basic residues predominate over residues 548 to 558 (AKQKKKGKKKQ).

This is Slender lobes-like protein from Drosophila melanogaster (Fruit fly).